A 345-amino-acid polypeptide reads, in one-letter code: tRNA dimethylallyltransferase (345 aa).

9–16 provides a ligand contact to ATP; sequence GPTASGKS. 11 to 16 is a substrate binding site; it reads TASGKS. Interaction with substrate tRNA regions lie at residues 34–37 and 195–199; these read DSMQ and QRMIR.

This sequence belongs to the IPP transferase family. Monomer. The cofactor is Mg(2+).

It carries out the reaction adenosine(37) in tRNA + dimethylallyl diphosphate = N(6)-dimethylallyladenosine(37) in tRNA + diphosphate. Catalyzes the transfer of a dimethylallyl group onto the adenine at position 37 in tRNAs that read codons beginning with uridine, leading to the formation of N6-(dimethylallyl)adenosine (i(6)A). The protein is tRNA dimethylallyltransferase of Orientia tsutsugamushi (strain Ikeda) (Rickettsia tsutsugamushi).